Consider the following 492-residue polypeptide: Protein nucleotidyltransferase YdiU (492 aa).

ATP contacts are provided by glycine 88, glycine 90, arginine 91, lysine 111, aspartate 123, glycine 124, arginine 174, and arginine 181. The active-site Proton acceptor is aspartate 250. Asparagine 251 and aspartate 260 together coordinate Mg(2+). Residue aspartate 260 participates in ATP binding.

The protein belongs to the SELO family. Mg(2+) is required as a cofactor. Requires Mn(2+) as cofactor.

The catalysed reaction is L-seryl-[protein] + ATP = 3-O-(5'-adenylyl)-L-seryl-[protein] + diphosphate. It catalyses the reaction L-threonyl-[protein] + ATP = 3-O-(5'-adenylyl)-L-threonyl-[protein] + diphosphate. It carries out the reaction L-tyrosyl-[protein] + ATP = O-(5'-adenylyl)-L-tyrosyl-[protein] + diphosphate. The enzyme catalyses L-histidyl-[protein] + UTP = N(tele)-(5'-uridylyl)-L-histidyl-[protein] + diphosphate. The catalysed reaction is L-seryl-[protein] + UTP = O-(5'-uridylyl)-L-seryl-[protein] + diphosphate. It catalyses the reaction L-tyrosyl-[protein] + UTP = O-(5'-uridylyl)-L-tyrosyl-[protein] + diphosphate. Nucleotidyltransferase involved in the post-translational modification of proteins. It can catalyze the addition of adenosine monophosphate (AMP) or uridine monophosphate (UMP) to a protein, resulting in modifications known as AMPylation and UMPylation. In Rhodopseudomonas palustris (strain HaA2), this protein is Protein nucleotidyltransferase YdiU.